We begin with the raw amino-acid sequence, 395 residues long: 8-amino-7-oxononanoate synthase/2-amino-3-ketobutyrate coenzyme A ligase (395 aa).

Position 110–111 (110–111) interacts with pyridoxal 5'-phosphate; that stretch reads GF. Histidine 135 contributes to the substrate binding site. Residues serine 182, 207-210, and 239-242 each bind pyridoxal 5'-phosphate; these read DDAH and TLSK. An N6-(pyridoxal phosphate)lysine modification is found at lysine 242. Threonine 356 contacts substrate.

The protein belongs to the class-II pyridoxal-phosphate-dependent aminotransferase family. In terms of assembly, homodimer. The cofactor is pyridoxal 5'-phosphate.

It carries out the reaction 6-carboxyhexanoyl-[ACP] + L-alanine + H(+) = (8S)-8-amino-7-oxononanoate + holo-[ACP] + CO2. The catalysed reaction is glycine + acetyl-CoA = (2S)-2-amino-3-oxobutanoate + CoA. It functions in the pathway cofactor biosynthesis; biotin biosynthesis. Its function is as follows. Catalyzes the decarboxylative condensation of pimeloyl-[acyl-carrier protein] and L-alanine to produce 8-amino-7-oxononanoate (AON), [acyl-carrier protein], and carbon dioxide. Can also use pimeloyl-CoA instead of pimeloyl-ACP as substrate. It also converts 2-amino-3-ketobutyrate and CoA to glycine and acetyl-CoA. Activity is also observed with the following combinations of substrates: acetyl-CoA and either L-alanine or L-serine, pimeloyl-CoA and either glycine or L-serine, and palmitoyl-CoA with L-alanine. This chain is 8-amino-7-oxononanoate synthase/2-amino-3-ketobutyrate coenzyme A ligase, found in Thermus thermophilus (strain ATCC 27634 / DSM 579 / HB8).